The primary structure comprises 380 residues: Probable dual-specificity RNA methyltransferase RlmN (380 aa).

E123 functions as the Proton acceptor in the catalytic mechanism. The Radical SAM core domain maps to 129–362 (HEYGNSVCVT…VTIRREQGSD (234 aa)). C136 and C367 are oxidised to a cystine. Residues C143, C147, and C150 each contribute to the [4Fe-4S] cluster site. Residues 193–194 (GE), S225, 248–250 (SLH), and N324 each bind S-adenosyl-L-methionine. Residue C367 is the S-methylcysteine intermediate of the active site.

It belongs to the radical SAM superfamily. RlmN family. Requires [4Fe-4S] cluster as cofactor.

The protein resides in the cytoplasm. It catalyses the reaction adenosine(2503) in 23S rRNA + 2 reduced [2Fe-2S]-[ferredoxin] + 2 S-adenosyl-L-methionine = 2-methyladenosine(2503) in 23S rRNA + 5'-deoxyadenosine + L-methionine + 2 oxidized [2Fe-2S]-[ferredoxin] + S-adenosyl-L-homocysteine. It carries out the reaction adenosine(37) in tRNA + 2 reduced [2Fe-2S]-[ferredoxin] + 2 S-adenosyl-L-methionine = 2-methyladenosine(37) in tRNA + 5'-deoxyadenosine + L-methionine + 2 oxidized [2Fe-2S]-[ferredoxin] + S-adenosyl-L-homocysteine. In terms of biological role, specifically methylates position 2 of adenine 2503 in 23S rRNA and position 2 of adenine 37 in tRNAs. The polypeptide is Probable dual-specificity RNA methyltransferase RlmN (Lysinibacillus sphaericus (strain C3-41)).